Reading from the N-terminus, the 130-residue chain is Small ribosomal subunit protein uS9 (130 aa).

It belongs to the universal ribosomal protein uS9 family.

The chain is Small ribosomal subunit protein uS9 from Azotobacter vinelandii (strain DJ / ATCC BAA-1303).